An 868-amino-acid chain; its full sequence is Monofunctional pimaradiene synthase (868 aa).

The Mg(2+) site is built by Asp-620, Asp-624, Asn-764, Thr-768, and Glu-772.

The protein belongs to the terpene synthase family. Tpsd subfamily. The cofactor is Mg(2+).

The catalysed reaction is (+)-copalyl diphosphate = (-)-pimara-8(14),15-diene + diphosphate. It participates in terpene metabolism; oleoresin biosynthesis. Functionally, involved in defensive oleoresin formation in conifers in response to insect attack or other injury. Involved in diterpene (C20) olefins biosynthesis. Monofunctional enzyme lacking the DXDD motif in the class II active site relevant for the cyclization of geranylgeranyl diphosphate (GGPP). Requires (+)-copalyl diphosphate ((+)-CPP) as substrate, but no activity with GGPP or ent-CPP. Pimaradiene is the major products of the enzyme. The protein is Monofunctional pimaradiene synthase of Pinus banksiana (Jack pine).